The following is a 618-amino-acid chain: UvrABC system protein C (618 aa).

A GIY-YIG domain is found at 13 to 92 (DKPGVYLMKN…IKKYRPKYNI (80 aa)). Positions 204–239 (LDIVENFKLNMEKAAENLEFEKAAMLRDKINIIEKI) constitute a UVR domain.

Belongs to the UvrC family. In terms of assembly, interacts with UvrB in an incision complex.

It is found in the cytoplasm. In terms of biological role, the UvrABC repair system catalyzes the recognition and processing of DNA lesions. UvrC both incises the 5' and 3' sides of the lesion. The N-terminal half is responsible for the 3' incision and the C-terminal half is responsible for the 5' incision. The polypeptide is UvrABC system protein C (Clostridium botulinum (strain Okra / Type B1)).